Consider the following 430-residue polypeptide: GTPase Obg (430 aa).

The 158-residue stretch at 1-158 (MFVDQVKISL…LDVSLELKLL (158 aa)) folds into the Obg domain. Residues 118–145 (KGGRGGRGNSRFATPRNPAPDFSEKGEP) are disordered. An OBG-type G domain is found at 159–329 (ADVGLVGFPS…LLYAIADKLE (171 aa)). Residues 165–172 (GFPSVGKS), 190–194 (FTTIK), 212–215 (DLPG), 282–285 (NKMD), and 310–312 (STI) each bind GTP. Ser-172 and Thr-192 together coordinate Mg(2+). The 79-residue stretch at 352–430 (KHTPSQDKFT…ILGGEFEFVE (79 aa)) folds into the OCT domain.

It belongs to the TRAFAC class OBG-HflX-like GTPase superfamily. OBG GTPase family. In terms of assembly, monomer. It depends on Mg(2+) as a cofactor.

It is found in the cytoplasm. Its function is as follows. An essential GTPase which binds GTP, GDP and possibly (p)ppGpp with moderate affinity, with high nucleotide exchange rates and a fairly low GTP hydrolysis rate. Plays a role in control of the cell cycle, stress response, ribosome biogenesis and in those bacteria that undergo differentiation, in morphogenesis control. This chain is GTPase Obg, found in Staphylococcus aureus (strain bovine RF122 / ET3-1).